The chain runs to 411 residues: Putative nickel insertion protein (411 aa).

The protein belongs to the LarC family.

This Methanothermobacter thermautotrophicus (strain ATCC 29096 / DSM 1053 / JCM 10044 / NBRC 100330 / Delta H) (Methanobacterium thermoautotrophicum) protein is Putative nickel insertion protein.